The primary structure comprises 285 residues: Dermonecrotic toxin LiSicTox-alphaIA2aii (285 aa).

Positions 1–5 (DVEER) are excised as a propeptide. Residue His-17 is part of the active site. Mg(2+) is bound by residues Glu-37 and Asp-39. The active-site Nucleophile is the His-53. 2 disulfide bridges follow: Cys-57–Cys-63 and Cys-59–Cys-202. Asp-97 lines the Mg(2+) pocket. An N-linked (GlcNAc...) asparagine glycan is attached at Asn-262.

Belongs to the arthropod phospholipase D family. Class II subfamily. Class IIa sub-subfamily. The cofactor is Mg(2+). In terms of tissue distribution, expressed by the venom gland.

It is found in the secreted. The catalysed reaction is an N-(acyl)-sphingosylphosphocholine = an N-(acyl)-sphingosyl-1,3-cyclic phosphate + choline. The enzyme catalyses an N-(acyl)-sphingosylphosphoethanolamine = an N-(acyl)-sphingosyl-1,3-cyclic phosphate + ethanolamine. It carries out the reaction a 1-acyl-sn-glycero-3-phosphocholine = a 1-acyl-sn-glycero-2,3-cyclic phosphate + choline. It catalyses the reaction a 1-acyl-sn-glycero-3-phosphoethanolamine = a 1-acyl-sn-glycero-2,3-cyclic phosphate + ethanolamine. Its function is as follows. Dermonecrotic toxins cleave the phosphodiester linkage between the phosphate and headgroup of certain phospholipids (sphingolipid and lysolipid substrates), forming an alcohol (often choline) and a cyclic phosphate. This toxin acts on sphingomyelin (SM) with high activity. It may also act on ceramide phosphoethanolamine (CPE), lysophosphatidylcholine (LPC) and lysophosphatidylethanolamine (LPE), but not on lysophosphatidylserine (LPS), and lysophosphatidylglycerol (LPG). It acts by transphosphatidylation, releasing exclusively cyclic phosphate products as second products. Shows high hemolytic activity. Induces dermonecrosis, vascular permeability, edema, inflammatory response, and platelet aggregation. Also shows cytotoxicity against renal epithelial cells. In addition, also induces hemolysis in a complement-dependent manner and probably also in a complement-independent manner. The hemolysis provoked in a complement-independent manner may be composed of several steps. The toxin may bind to erythrocyte membranes, may hydrolyze membrane phospholipids (SM and LPC) thus generating metabolism products that may cause hemolysis, probably by provoking an increase of calcium inside cells. The calcium influx may be due to the opening of L-type calcium channels, since L-type calcium channel blockers inhibit calcium influx. In vivo, is lethal to mice when intraperitoneally injected. The protein is Dermonecrotic toxin LiSicTox-alphaIA2aii of Loxosceles intermedia (Brown spider).